The sequence spans 977 residues: Vacuolar protein sorting-associated protein 54 (977 aa).

Serine 8 is subject to Phosphoserine. Positions 239–261 (HELQDYLKKTTQAVKMLRDKIAQ) form a coiled coil. The disordered stretch occupies residues 528 to 573 (ASAAVDTTSQRNTSPHSEPCSSDSVSEPECTTDSSSSKEQTSACAP). Positions 532 to 570 (VDTTSQRNTSPHSEPCSSDSVSEPECTTDSSSSKEQTSA) are enriched in polar residues.

This sequence belongs to the VPS54 family. Component of the Golgi-associated retrograde protein (GARP) complex, also called VFT (VPS fifty-three) complex, composed of VPS51, VPS52, VPS53 and VPS54. EIPR1 interacts with GARP complex and mediates its recruitment to the trans-Golgi network. Interacts with VPS51 in an EIPR1-independent manner.

It localises to the golgi apparatus. Its subcellular location is the trans-Golgi network. It is found in the membrane. Acts as a component of the GARP complex that is involved in retrograde transport from early and late endosomes to the trans-Golgi network (TGN). The GARP complex is required for the maintenance of the cycling of mannose 6-phosphate receptors between the TGN and endosomes, this cycling is necessary for proper lysosomal sorting of acid hydrolases such as CTSD. Within the GARP complex, required to tether the complex to the TGN. Not involved in endocytic recycling. The polypeptide is Vacuolar protein sorting-associated protein 54 (Vps54) (Mus musculus (Mouse)).